Here is a 462-residue protein sequence, read N- to C-terminus: L-seryl-tRNA(Sec) selenium transferase (462 aa).

At Lys295 the chain carries N6-(pyridoxal phosphate)lysine.

Belongs to the SelA family. As to quaternary structure, homodecamer; pentamer of dimers. Binds only one seryl-tRNA(Sec) per dimer. It depends on pyridoxal 5'-phosphate as a cofactor.

It localises to the cytoplasm. It carries out the reaction L-seryl-tRNA(Sec) + selenophosphate + H(+) = L-selenocysteinyl-tRNA(Sec) + phosphate. The protein operates within aminoacyl-tRNA biosynthesis; selenocysteinyl-tRNA(Sec) biosynthesis; selenocysteinyl-tRNA(Sec) from L-seryl-tRNA(Sec) (bacterial route): step 1/1. Its function is as follows. Converts seryl-tRNA(Sec) to selenocysteinyl-tRNA(Sec) required for selenoprotein biosynthesis. In Klebsiella pneumoniae subsp. pneumoniae (strain ATCC 700721 / MGH 78578), this protein is L-seryl-tRNA(Sec) selenium transferase.